We begin with the raw amino-acid sequence, 198 residues long: Cyclin-dependent kinase inhibitor 1B (198 aa).

Positions 1–11 (MSNVRVSNGSP) are enriched in polar residues. Residues 1 to 34 (MSNVRVSNGSPSLERMDARQAEHPKPSACRNLFG) are disordered. Phosphoserine; by UHMK1 is present on Ser-10. The segment covering 14–25 (ERMDARQAEHPK) has biased composition (basic and acidic residues). The interaction with CDK2 stretch occupies residues 51–91 (DMEEASQRKWNFDFQNHKPLEGKYEWQEVEKGSLPEFYYRP). At Tyr-74 the chain carries Phosphotyrosine; by SRC. The segment at 85–198 (PEFYYRPPRP…KKPGLRRRQT (114 aa)) is disordered. Tyr-88 is modified (phosphotyrosine; by ABL, LYN, SRC and JAK2). A Phosphotyrosine modification is found at Tyr-89. Residues 126 to 137 (EDTHLVDPKTDP) are compositionally biased toward basic and acidic residues. The short motif at 153 to 169 (KRPATDDSSTQNKRANR) is the Nuclear localization signal element. Thr-157 carries the phosphothreonine; by CaMK1, PKB/AKT1 and PIM1 modification. At Thr-170 the chain carries Phosphothreonine. The span at 175–186 (SDGSPNAGSVEQ) shows a compositional bias: polar residues. Phosphothreonine; by PKB/AKT1, CDK1 and CDK2 is present on Thr-187. A Phosphothreonine; by CaMK1, PKB/AKT1, RPS6KA1, RPS6KA3 and PIM1 modification is found at Thr-198.

Belongs to the CDI family. As to quaternary structure, forms a ternary complex composed of CCNE1, CDK2 and CDKN1B. Interacts directly with CCNE1; the interaction is inhibited by CDK2-dependent phosphorylation on Thr-187. Interacts with COPS5, subunit of the COP9 signalosome complex; the interaction leads to CDKN1B degradation. Interacts with NUP50; the interaction leads to nuclear import and degradation of phosphorylated CDKN1B. Interacts with CCND1 and SNX6. Interacts (Thr-198-phosphorylated form) with 14-3-3 proteins, binds strongly YWHAQ, weakly YWHAE and YWHAH, but not YWHAB nor YWHAZ; the interaction with YWHAQ results in translocation to the cytoplasm. Interacts with AKT1 and LYN; the interactions lead to cytoplasmic mislocation, phosphorylation of CDKN1B and inhibition of cell cycle arrest. Forms a ternary complex with CCNA2 and CDK2; CDKN1B inhibits the kinase activity of CDK2 through conformational rearrangements. Interacts (unphosphorylated form) with CDK2. Forms a complex with CDK2 and SPDYA, but does not directly interact with SPDYA. Forms a ternary complex composed of cyclin D, CDK4 and CDKN1B. Interacts (phosphorylated on Tyr-88 and Tyr-89) with CDK4; the interaction is required for cyclin D and CDK4 complex assembly, induces nuclear translocation and activates the CDK4 kinase activity. Interacts with GRB2. Interacts with PIM1. Identified in a complex with SKP1, SKP2 and CKS1B. Interacts with UHMK1; the interaction leads to cytoplasmic mislocation, phosphorylation of CDKN1B and inhibition of cell cycle arrest. Also interacts with CDK1. Dephosphorylated on Thr-187 by PPM1H, leading to CDKN1B stability. Interacts with HSPA8; the interaction may be associated with susceptibility to ubiquitination. Phosphorylated; phosphorylation occurs on serine, threonine and tyrosine residues. Phosphorylation on Ser-10 is the major site of phosphorylation in resting cells, takes place at the G(0)-G(1) phase and leads to protein stability. Phosphorylation on other sites is greatly enhanced by mitogens, growth factors, cMYC and in certain cancer cell lines. The phosphorylated form found in the cytoplasm is inactivate. Phosphorylation on Thr-198 is required for interaction with 14-3-3 proteins. Phosphorylation on Thr-187, by CDK1 and CDK2 leads to protein ubiquitination and proteasomal degradation. Tyrosine phosphorylation promotes this process. Phosphorylation by PKB/AKT1 can be suppressed by LY294002, an inhibitor of the catalytic subunit of PI3K. Phosphorylation on Tyr-88 and Tyr-89 has no effect on binding CDK2, but is required for binding CDK4. Dephosphorylated on tyrosine residues by G-CSF. In terms of processing, ubiquitinated; in the cytoplasm by the KPC complex (composed of RNF123/KPC1 and UBAC1/KPC2) and, in the nucleus, by SCF(SKP2). The latter requires prior phosphorylation on Thr-187. Ubiquitinated; by a TRIM21-containing SCF(SKP2)-like complex; leads to its degradation. Post-translationally, subject to degradation in the lysosome. Interaction with SNX6 promotes lysosomal degradation. In terms of tissue distribution, expressed in kidney (at protein level). Expressed in all tissues tested. Highest levels in skeletal muscle, lowest in liver and kidney.

The protein localises to the nucleus. Its subcellular location is the cytoplasm. The protein resides in the endosome. Important regulator of cell cycle progression. Inhibits the kinase activity of CDK2 bound to cyclin A, but has little inhibitory activity on CDK2 bound to SPDYA. Involved in G1 arrest. Potent inhibitor of cyclin E- and cyclin A-CDK2 complexes. Forms a complex with cyclin type D-CDK4 complexes and is involved in the assembly, stability, and modulation of CCND1-CDK4 complex activation. Acts either as an inhibitor or an activator of cyclin type D-CDK4 complexes depending on its phosphorylation state and/or stoichometry. The polypeptide is Cyclin-dependent kinase inhibitor 1B (Homo sapiens (Human)).